The following is a 298-amino-acid chain: MESENIISAADKARILAEALPYIRRFSGSVAVIKYGGNAMTEPALKEGFARDVVLLKLVGIHPVIVHGGGPQINAMLEKVGKKGEFVQGMRVTDKEAMDIVEMVLGGHVNKEIVSMINTYGGHAVGVSGRDDHFIKAKKLLIDTPEQNGVDIGQVGTVESIDTGLVKGLIERGCIPVVAPVGVGEKGEAFNINADLVAGKLAEELNAEKLLMMTNIAGVMDKTGNLLTKLTPKRIDELIADGTLYGGMLPKIASAVEAAVNGVKATHIIDGRVPNALLLEIFTDAGIGSMILGGGEDA.

Residues 69 to 70, arginine 91, and asparagine 191 contribute to the substrate site; that span reads GG.

It belongs to the acetylglutamate kinase family. ArgB subfamily.

It localises to the cytoplasm. It catalyses the reaction N-acetyl-L-glutamate + ATP = N-acetyl-L-glutamyl 5-phosphate + ADP. It functions in the pathway amino-acid biosynthesis; L-arginine biosynthesis; N(2)-acetyl-L-ornithine from L-glutamate: step 2/4. Catalyzes the ATP-dependent phosphorylation of N-acetyl-L-glutamate. This Neisseria meningitidis serogroup A / serotype 4A (strain DSM 15465 / Z2491) protein is Acetylglutamate kinase.